Consider the following 30-residue polypeptide: Sillucin (30 aa).

4 cysteine pairs are disulfide-bonded: C2-C7, C12-C24, C13-C30, and C14-C21.

It is found in the secreted. In terms of biological role, sillucin is an antimicrobial agent produced by the thermophilic fungus Rhizomucor pusillus in liquid culture; it is effective against Gram-positive bacteria at the level of RNA metabolism. The protein is Sillucin of Rhizomucor pusillus.